A 98-amino-acid polypeptide reads, in one-letter code: MKSSIPITEVLPRAVGSLTFDENYNLLDTSGVAKVIEKSPIAEIIRKSNAELGRLGYSVYEDAQYIGHAFKKAGHFIVYFTPKNKNREGVVPPVGITN.

Its subcellular location is the cytoplasm. This is an uncharacterized protein from Saccharomyces cerevisiae (strain ATCC 204508 / S288c) (Baker's yeast).